We begin with the raw amino-acid sequence, 535 residues long: CTP synthase (535 aa).

Residues 1 to 268 form an amidoligase domain region; sequence MKTKYIFVTG…DSLVCKKLEL (268 aa). Ser-14 is a CTP binding site. Ser-14 is a UTP binding site. Residue 15-20 participates in ATP binding; it reads SLGKGI. Tyr-55 contacts L-glutamine. Asp-72 serves as a coordination point for ATP. 2 residues coordinate Mg(2+): Asp-72 and Glu-142. CTP-binding positions include 149-151, 189-194, and Lys-225; these read DIE and KTKPTQ. UTP-binding positions include 189–194 and Lys-225; that span reads KTKPTQ. In terms of domain architecture, Glutamine amidotransferase type-1 spans 293-535; sequence TIGLVGKYVE…IKVACTVKEK (243 aa). L-glutamine is bound at residue Gly-355. The Nucleophile; for glutamine hydrolysis role is filled by Cys-382. Residues 383–386, Glu-406, and Arg-463 each bind L-glutamine; that span reads LGMQ. Active-site residues include His-508 and Glu-510.

It belongs to the CTP synthase family. As to quaternary structure, homotetramer.

It carries out the reaction UTP + L-glutamine + ATP + H2O = CTP + L-glutamate + ADP + phosphate + 2 H(+). The enzyme catalyses L-glutamine + H2O = L-glutamate + NH4(+). The catalysed reaction is UTP + NH4(+) + ATP = CTP + ADP + phosphate + 2 H(+). The protein operates within pyrimidine metabolism; CTP biosynthesis via de novo pathway; CTP from UDP: step 2/2. Its activity is regulated as follows. Allosterically activated by GTP, when glutamine is the substrate; GTP has no effect on the reaction when ammonia is the substrate. The allosteric effector GTP functions by stabilizing the protein conformation that binds the tetrahedral intermediate(s) formed during glutamine hydrolysis. Inhibited by the product CTP, via allosteric rather than competitive inhibition. Functionally, catalyzes the ATP-dependent amination of UTP to CTP with either L-glutamine or ammonia as the source of nitrogen. Regulates intracellular CTP levels through interactions with the four ribonucleotide triphosphates. This is CTP synthase from Clostridium acetobutylicum (strain ATCC 824 / DSM 792 / JCM 1419 / IAM 19013 / LMG 5710 / NBRC 13948 / NRRL B-527 / VKM B-1787 / 2291 / W).